Reading from the N-terminus, the 454-residue chain is tRNA modification GTPase MnmE (454 aa).

(6S)-5-formyl-5,6,7,8-tetrahydrofolate is bound by residues R23, E80, and K120. One can recognise a TrmE-type G domain in the interval 216-377 (GMKVVIAGRP…LRNHLKQSMG (162 aa)). Position 226 (N226) interacts with K(+). GTP is bound by residues 226 to 231 (NAGKSS), 245 to 251 (TDIAGTT), 270 to 273 (DTAG), 335 to 338 (NKAD), and 358 to 360 (SAR). Residue S230 coordinates Mg(2+). The K(+) site is built by T245, I247, and T250. Position 251 (T251) interacts with Mg(2+). K454 lines the (6S)-5-formyl-5,6,7,8-tetrahydrofolate pocket.

This sequence belongs to the TRAFAC class TrmE-Era-EngA-EngB-Septin-like GTPase superfamily. TrmE GTPase family. Homodimer. Heterotetramer of two MnmE and two MnmG subunits. The cofactor is K(+).

It is found in the cytoplasm. In terms of biological role, exhibits a very high intrinsic GTPase hydrolysis rate. Involved in the addition of a carboxymethylaminomethyl (cmnm) group at the wobble position (U34) of certain tRNAs, forming tRNA-cmnm(5)s(2)U34. The polypeptide is tRNA modification GTPase MnmE (Shigella dysenteriae serotype 1 (strain Sd197)).